The chain runs to 235 residues: 2-C-methyl-D-erythritol 4-phosphate cytidylyltransferase (235 aa).

The protein belongs to the IspD/TarI cytidylyltransferase family. IspD subfamily.

It catalyses the reaction 2-C-methyl-D-erythritol 4-phosphate + CTP + H(+) = 4-CDP-2-C-methyl-D-erythritol + diphosphate. It functions in the pathway isoprenoid biosynthesis; isopentenyl diphosphate biosynthesis via DXP pathway; isopentenyl diphosphate from 1-deoxy-D-xylulose 5-phosphate: step 2/6. In terms of biological role, catalyzes the formation of 4-diphosphocytidyl-2-C-methyl-D-erythritol from CTP and 2-C-methyl-D-erythritol 4-phosphate (MEP). This is 2-C-methyl-D-erythritol 4-phosphate cytidylyltransferase from Pseudomonas fluorescens (strain SBW25).